Here is a 154-residue protein sequence, read N- to C-terminus: Small ribosomal subunit protein uS13 (154 aa).

Belongs to the universal ribosomal protein uS13 family.

Its subcellular location is the cytoplasm. Functionally, located at the top of the head of the 40S subunit, it contacts several helices of the 18S rRNA. In Dictyostelium discoideum (Social amoeba), this protein is Small ribosomal subunit protein uS13 (rps18).